Consider the following 275-residue polypeptide: 3-methyl-2-oxobutanoate hydroxymethyltransferase (275 aa).

Mg(2+)-binding residues include Asp-49 and Asp-88. 3-methyl-2-oxobutanoate is bound by residues 49–50, Asp-88, and Lys-118; that span reads DS. Glu-120 contacts Mg(2+). The Proton acceptor role is filled by Glu-187.

It belongs to the PanB family. Homodecamer; pentamer of dimers. The cofactor is Mg(2+).

It is found in the cytoplasm. It catalyses the reaction 3-methyl-2-oxobutanoate + (6R)-5,10-methylene-5,6,7,8-tetrahydrofolate + H2O = 2-dehydropantoate + (6S)-5,6,7,8-tetrahydrofolate. Its pathway is cofactor biosynthesis; (R)-pantothenate biosynthesis; (R)-pantoate from 3-methyl-2-oxobutanoate: step 1/2. Catalyzes the reversible reaction in which hydroxymethyl group from 5,10-methylenetetrahydrofolate is transferred onto alpha-ketoisovalerate to form ketopantoate. The sequence is that of 3-methyl-2-oxobutanoate hydroxymethyltransferase from Nitrobacter hamburgensis (strain DSM 10229 / NCIMB 13809 / X14).